We begin with the raw amino-acid sequence, 99 residues long: Acylphosphatase-2 (99 aa).

S2 is subject to N-acetylserine. One can recognise an Acylphosphatase-like domain in the interval 9-99 (SVDYEVFGRV…LEYSNFSIRY (91 aa)). Catalysis depends on residues R24 and N42. At S93 the chain carries Phosphoserine.

Belongs to the acylphosphatase family.

It catalyses the reaction an acyl phosphate + H2O = a carboxylate + phosphate + H(+). In terms of biological role, its physiological role is not yet clear. The protein is Acylphosphatase-2 (ACYP2) of Homo sapiens (Human).